A 315-amino-acid polypeptide reads, in one-letter code: Deoxyribonuclease-1-like 1 (315 aa).

The first 29 residues, 1–29 (MDSSGGFQKHTCGHALLLLLLLLAGGAEA), serve as a signal peptide directing secretion. Active-site residues include glutamate 108 and histidine 159. Residues cysteine 198 and cysteine 235 are joined by a disulfide bond. A glycan (N-linked (GlcNAc...) asparagine) is linked at asparagine 272.

This sequence belongs to the DNase I family.

The protein localises to the endoplasmic reticulum. The sequence is that of Deoxyribonuclease-1-like 1 (DNASE1L1) from Sus scrofa (Pig).